We begin with the raw amino-acid sequence, 427 residues long: MGFISSILCCSSETTQSNSNSAYRQQQSSSLNKNRSVKHSNTKSRTRGVHQTNSPPSKTNSAATFSSTERSTGKSGISTNDNEKKKPSSPTAAVTATTTNNMTKVEKRISKDDLYEEKYEVDEDEEIDDEDNRRSRGIVQEKGDAVKDTSRQKKQQQQQQQQSQPQPQPQSQSQSQSQSQSQQRGPTVQVSSDHLIQDMNLSRVSSSSQASETSNDADDEDDEDEEYIDLTLLQQGQYHAPGYNTLLPPQDESTKGKKCLILDLDETLVHSSFKYLRSADFVLSVEIDDQVHNVYVIKRPGVEEFLERVGKLFEVVVFTASVSRYGDPLLDILDTDKVIHHRLFREACYNYEGNYIKNLSQIGRPLSDIIILDNSPASYIFHPQHAIPISSWFSDTHDNELLDIIPLLEDLSVKTSLDVGKILDVTI.

2 S-palmitoyl cysteine lipidation sites follow: cysteine 9 and cysteine 10. Positions 14-34 (TTQSNSNSAYRQQQSSSLNKN) are enriched in polar residues. Positions 14–223 (TTQSNSNSAY…SNDADDEDDE (210 aa)) are disordered. Residues 35 to 48 (RSVKHSNTKSRTRG) are compositionally biased toward basic residues. Positions 49–80 (VHQTNSPPSKTNSAATFSSTERSTGKSGISTN) are enriched in polar residues. Basic and acidic residues predominate over residues 104 to 118 (KVEKRISKDDLYEEK). Serine 110 is subject to Phosphoserine. Positions 119–130 (YEVDEDEEIDDE) are enriched in acidic residues. Positions 131–151 (DNRRSRGIVQEKGDAVKDTSR) are enriched in basic and acidic residues. Residue lysine 154 forms a Glycyl lysine isopeptide (Lys-Gly) (interchain with G-Cter in ubiquitin) linkage. A compositionally biased stretch (low complexity) spans 155 to 183 (QQQQQQQQSQPQPQPQSQSQSQSQSQSQQ). Residues 184-214 (RGPTVQVSSDHLIQDMNLSRVSSSSQASETS) show a composition bias toward polar residues. The region spanning 253-411 (STKGKKCLIL…LDIIPLLEDL (159 aa)) is the FCP1 homology domain.

As to quaternary structure, interacts with WHI2.

The protein localises to the cell membrane. Its function is as follows. Has phosphatase activity in vitro. Involved in the response to sodium and lithium ion stress (but not to potassium or sorbitol stress) by inducing transcription of the sodium pump ENA1/PMR2. Acts through a calcineurin-independent pathway and is functionally redundant with PSR2. Also involved in the general stress response; acts together with WHI2 to activate stress response element (STRE)-mediated gene expression, possibly through dephosphorylation of MSN2. This Saccharomyces cerevisiae (strain ATCC 204508 / S288c) (Baker's yeast) protein is Phosphatase PSR1 (PSR1).